The primary structure comprises 272 residues: Auxin-responsive protein IAA5 (272 aa).

Residues 1–92 are disordered; it reads MSPPLEPHDY…DSSPRHGASS (92 aa). Composition is skewed to low complexity over residues 14 to 33 and 40 to 50; these read SAAA…SPNP and PRLTLRLGLPG. The short motif at 44 to 48 is the EAR-like (transcriptional repression) element; sequence LRLGL. In terms of domain architecture, PB1 spans 152–256; sequence PLYVKVSMDG…RKLKIMRGSD (105 aa).

Belongs to the Aux/IAA family. In terms of assembly, homodimers and heterodimers. As to expression, highly expressed in roots and flowers. Expressed in shoots.

It localises to the nucleus. In terms of biological role, aux/IAA proteins are short-lived transcriptional factors that function as repressors of early auxin response genes at low auxin concentrations. The chain is Auxin-responsive protein IAA5 (IAA5) from Oryza sativa subsp. indica (Rice).